Here is a 372-residue protein sequence, read N- to C-terminus: Protein L-Myc-1a (372 aa).

Disordered regions lie at residues 172–226 and 243–306; these read KVAA…ADPF and NYAA…DDLR. Positions 187–197 are enriched in acidic residues; sequence SDDDEDDDEID. Over residues 269-284 the composition is skewed to low complexity; that stretch reads ESSSAPSSPLSSPATS. The 53-residue stretch at 289-341 folds into the bHLH domain; the sequence is STEQRRNFLERKRRDDLRSRFQALREEIPGLSGSSKTSKVAILTQATDYLLQL. The span at 290-306 shows a compositional bias: basic and acidic residues; it reads TEQRRNFLERKRRDDLR. A leucine-zipper region spans residues 341 to 369; the sequence is LHSSQRRQAQEKRKLKAKQQQLLRRISAL.

In terms of assembly, efficient DNA binding requires dimerization with another bHLH protein. Binds DNA as a heterodimer with max. Uterus.

It localises to the nucleus. This Danio rerio (Zebrafish) protein is Protein L-Myc-1a.